The chain runs to 232 residues: MQNFFALIPAAGSGSRMGDRMPKQYLTLAGKPMIHHALATLCNSPRLSRVFVVLSPGDVEWARHDWSEFSSKLSMLECGGATRAETVLNGLKAAQEGTAIEDDDWVLVHDAARPCLGGKLLDKLMDELEEDEVGGLLAVPVADTLKRSDPTCRAERTEPREGLWQAQTPQMFRYRTLVNALSGAGGVTMTDDAGAIEALGLRPKLVVSDARNLKVTYPQDLALAELILKNCK.

The protein belongs to the IspD/TarI cytidylyltransferase family. IspD subfamily.

It carries out the reaction 2-C-methyl-D-erythritol 4-phosphate + CTP + H(+) = 4-CDP-2-C-methyl-D-erythritol + diphosphate. Its pathway is isoprenoid biosynthesis; isopentenyl diphosphate biosynthesis via DXP pathway; isopentenyl diphosphate from 1-deoxy-D-xylulose 5-phosphate: step 2/6. Functionally, catalyzes the formation of 4-diphosphocytidyl-2-C-methyl-D-erythritol from CTP and 2-C-methyl-D-erythritol 4-phosphate (MEP). This Nitrosospira multiformis (strain ATCC 25196 / NCIMB 11849 / C 71) protein is 2-C-methyl-D-erythritol 4-phosphate cytidylyltransferase.